Here is a 390-residue protein sequence, read N- to C-terminus: Caveolae-associated protein 1 (390 aa).

Met-1 carries the N-acetylmethionine modification. The tract at residues 1–40 (MEDPTLYIVERPLPGYPDAEAPEPSSAGAQAAEEPSGAGS) is disordered. The interval 1–98 (MEDPTLYIVE…IQGELSKLGK (98 aa)) is required for homotrimerization and for interaction with CAVIN2 and CAVIN3. The segment covering 22 to 40 (PEPSSAGAQAAEEPSGAGS) has biased composition (low complexity). 3 positions are modified to phosphoserine: Ser-36, Ser-40, and Ser-46. A nuclear export signal region spans residues 52-62 (VLVLSLLDKII). Residues 53-75 (LVLSLLDKIIGAVDQIQLTQAQL) are leucine-zipper 1. A Glycyl lysine isopeptide (Lys-Gly) (interchain with G-Cter in SUMO2) cross-link involves residue Lys-116. A Phosphoserine modification is found at Ser-118. Lys-122 participates in a covalent cross-link: Glycyl lysine isopeptide (Lys-Gly) (interchain with G-Cter in SUMO2). The segment at 136-152 (KKLEVNEAELLRRRNFK) is nuclear localization signal. Tyr-156 is modified (phosphotyrosine). Lys-161 is covalently cross-linked (Glycyl lysine isopeptide (Lys-Gly) (interchain with G-Cter in SUMO1); alternate). Lys-161 participates in a covalent cross-link: Glycyl lysine isopeptide (Lys-Gly) (interchain with G-Cter in SUMO2); alternate. A Glycyl lysine isopeptide (Lys-Gly) (interchain with G-Cter in SUMO2) cross-link involves residue Lys-165. Residues 166–186 (LSISKSLKESEALPEKEGEEL) are leucine-zipper 2. Phosphoserine is present on residues Ser-167 and Ser-169. A Glycyl lysine isopeptide (Lys-Gly) (interchain with G-Cter in SUMO2) cross-link involves residue Lys-170. Ser-171 and Ser-175 each carry phosphoserine. The span at 172–181 (LKESEALPEK) shows a compositional bias: basic and acidic residues. The interval 172-201 (LKESEALPEKEGEELGEGERPEEDAAALEL) is disordered. Residues 182 to 201 (EGEELGEGERPEEDAAALEL) show a composition bias toward acidic residues. Residues 199–282 (LELSSDEAVE…RMNKLGTRLV (84 aa)) are a coiled coil. 2 positions are modified to phosphoserine: Ser-202 and Ser-203. The segment at 233–249 (KKAFSKEKMEKTKVRTR) is nuclear localization signal. The interval 257–297 (LKTKENLEKTRHTLEKRMNKLGTRLVPAERREKLKTSRDKL) is leucine-zipper 3. Position 300 is a phosphoserine (Ser-300). The residue at position 302 (Thr-302) is a Phosphothreonine. Tyr-308 bears the Phosphotyrosine mark. A Glycyl lysine isopeptide (Lys-Gly) (interchain with G-Cter in SUMO2) cross-link involves residue Lys-326. Positions 344-366 (VGADDDEGGAERGEAGDLRRGSS) are disordered. Basic and acidic residues predominate over residues 352-365 (GAERGEAGDLRRGS). Ser-365, Ser-366, Ser-379, Ser-387, and Ser-389 each carry phosphoserine.

This sequence belongs to the CAVIN family. As to quaternary structure, component of the CAVIN complex composed of CAVIN1, CAVIN2, CAVIN3 and CAVIN4. Homotrimer. Interacts with TTF1. Interacts with RNA polymerase I subunit POLR1A/RPA1. Binds the 3' end of pre-rRNA. Interacts with transcription factor ZNF148. Interacts with LIPE in the adipocyte cytoplasm. Interacts with CAV1 and CAVIN3. Interacts with CAVIN2. Interacts with CAVIN4 and CAV3. Post-translationally, phosphorylated. Present in active and inactive forms. Changes in phosphorylation pattern may alter activity. Phosphorylation at Tyr-156 is essential for its functionin the regulation of ribosomal transcriptional activity. Five truncated forms are found in the caveolae. These are thought to be the result of proteolysis and may be phosphorylation-dependent. In terms of processing, monoubiquitinated.

Its subcellular location is the membrane. It localises to the caveola. The protein localises to the cell membrane. The protein resides in the microsome. It is found in the endoplasmic reticulum. Its subcellular location is the cytoplasm. It localises to the cytosol. The protein localises to the mitochondrion. The protein resides in the nucleus. Plays an important role in caveolae formation and organization. Essential for the formation of caveolae in all tissues. Core component of the CAVIN complex which is essential for recruitment of the complex to the caveolae in presence of calveolin-1 (CAV1). Essential for normal oligomerization of CAV1. Promotes ribosomal transcriptional activity in response to metabolic challenges in the adipocytes and plays an important role in the formation of the ribosomal transcriptional loop. Dissociates transcription complexes paused by DNA-bound TTF1, thereby releasing both RNA polymerase I and pre-RNA from the template. The caveolae biogenesis pathway is required for the secretion of proteins such as GASK1A. In Homo sapiens (Human), this protein is Caveolae-associated protein 1.